We begin with the raw amino-acid sequence, 185 residues long: uncharacterized protein (185 aa).

The next 5 membrane-spanning stretches (helical) occupy residues isoleucine 4–alanine 24, glycine 35–valine 55, glycine 60–tyrosine 80, valine 123–serine 143, and isoleucine 152–isoleucine 172.

The protein localises to the cell membrane. This is an uncharacterized protein from Bacillus subtilis (strain 168).